Reading from the N-terminus, the 50-residue chain is MAPPQHLCGSHLVDALYLVCGDRGFFYNSGIVEQCCHRPCDKFDLQSYCN.

Disulfide bonds link C8-C36, C20-C49, and C35-C40.

This sequence belongs to the insulin family. As to quaternary structure, heterodimer of a B chain and an A chain linked by two disulfide bonds.

The protein resides in the secreted. In terms of biological role, insulin decreases blood glucose concentration. It increases cell permeability to monosaccharides, amino acids and fatty acids. It accelerates glycolysis, the pentose phosphate cycle, and glycogen synthesis in liver. This is Insulin 2 (ins2) from Batrachoididae sp. (Toadfish).